A 468-amino-acid polypeptide reads, in one-letter code: Glutamate--tRNA ligase (468 aa).

The 'HIGH' region motif lies at 8–18 (PSPTGFLHVGG). Residues cysteine 97, cysteine 99, cysteine 124, and aspartate 126 each coordinate Zn(2+). The 'KMSKS' region motif lies at 236–240 (KLSKR). Position 239 (lysine 239) interacts with ATP.

Belongs to the class-I aminoacyl-tRNA synthetase family. Glutamate--tRNA ligase type 1 subfamily. In terms of assembly, monomer. It depends on Zn(2+) as a cofactor.

It localises to the cytoplasm. The catalysed reaction is tRNA(Glu) + L-glutamate + ATP = L-glutamyl-tRNA(Glu) + AMP + diphosphate. Functionally, catalyzes the attachment of glutamate to tRNA(Glu) in a two-step reaction: glutamate is first activated by ATP to form Glu-AMP and then transferred to the acceptor end of tRNA(Glu). This chain is Glutamate--tRNA ligase, found in Francisella tularensis subsp. mediasiatica (strain FSC147).